We begin with the raw amino-acid sequence, 320 residues long: Cytochrome f (320 aa).

The first 35 residues, 1–35 (MQTRNTFSSIKEEITRSISVSLMIYIITWAPVSNA), serve as a signal peptide directing secretion. Heme contacts are provided by Tyr36, Cys56, Cys59, and His60. Residues 286–306 (VQGLLFFFASVILAQIFLVLK) form a helical membrane-spanning segment.

It belongs to the cytochrome f family. As to quaternary structure, the 4 large subunits of the cytochrome b6-f complex are cytochrome b6, subunit IV (17 kDa polypeptide, petD), cytochrome f and the Rieske protein, while the 4 small subunits are PetG, PetL, PetM and PetN. The complex functions as a dimer. Heme serves as cofactor.

It localises to the plastid. The protein localises to the chloroplast thylakoid membrane. Its function is as follows. Component of the cytochrome b6-f complex, which mediates electron transfer between photosystem II (PSII) and photosystem I (PSI), cyclic electron flow around PSI, and state transitions. This Cucumis sativus (Cucumber) protein is Cytochrome f.